The primary structure comprises 279 residues: Undecaprenyl-diphosphatase (279 aa).

8 helical membrane-spanning segments follow: residues methionine 1–serine 21, glycine 39–phenylalanine 59, leucine 96–valine 116, phenylalanine 128–phenylalanine 148, isoleucine 155–isoleucine 175, phenylalanine 201–glycine 221, tyrosine 231–leucine 251, and phenylalanine 259–phenylalanine 279.

It belongs to the UppP family.

Its subcellular location is the cell membrane. The enzyme catalyses di-trans,octa-cis-undecaprenyl diphosphate + H2O = di-trans,octa-cis-undecaprenyl phosphate + phosphate + H(+). In terms of biological role, catalyzes the dephosphorylation of undecaprenyl diphosphate (UPP). Confers resistance to bacitracin. The polypeptide is Undecaprenyl-diphosphatase (Tropheryma whipplei (strain Twist) (Whipple's bacillus)).